Reading from the N-terminus, the 349-residue chain is MSRAKRKIEHIQHALSTADQGASGFDDITFVHQSLPDVRMNDIHLHTALGELSLSSPFFINAMTGGGGKQTFEINKGLAEAAKHCRIAMAVGSQTSALRDNKQRGTFEIVRKVNKNGIIFANIGSEATVDDAKRAVDMIEADGLQIHLNVVQELVMPEGDRDFTGVLLRIEQIVQAVQVPVIVKEVGFGMSKETASRLEEVGVKIIDVGGLGGTNFARIENKRRSNIITYFNDWGIPTAASIVEVAQTSPSLVVIGSGGVRTALDAAKAIALGASAVGMAGPLLRTLVEQGVEALVASIEELHHDLTLIMGALGAKTIDKLQRVPLVIRGDTHHWLTERGFDTKVYSCR.

6–7 (RK) lines the substrate pocket. FMN-binding positions include 62–64 (AMT), Ser-93, and Asn-122. Gln-152 is a substrate binding site. Glu-153 contributes to the Mg(2+) binding site. Residues Lys-184, Thr-214, 259–261 (GVR), and 280–281 (AG) each bind FMN.

Belongs to the IPP isomerase type 2 family. As to quaternary structure, homooctamer. Dimer of tetramers. The cofactor is FMN. NADPH is required as a cofactor. Mg(2+) serves as cofactor.

It is found in the cytoplasm. The enzyme catalyses isopentenyl diphosphate = dimethylallyl diphosphate. In terms of biological role, involved in the biosynthesis of isoprenoids. Catalyzes the 1,3-allylic rearrangement of the homoallylic substrate isopentenyl (IPP) to its allylic isomer, dimethylallyl diphosphate (DMAPP). The chain is Isopentenyl-diphosphate delta-isomerase from Geobacillus sp. (strain WCH70).